A 453-amino-acid chain; its full sequence is Allantoinase (453 aa).

Zn(2+) is bound by residues His59, His61, Lys146, His186, His242, and Asp315. Lys146 carries the N6-carboxylysine modification.

The protein belongs to the metallo-dependent hydrolases superfamily. Allantoinase family. In terms of assembly, homotetramer. Zn(2+) is required as a cofactor. Carboxylation allows a single lysine to coordinate two zinc ions.

The catalysed reaction is (S)-allantoin + H2O = allantoate + H(+). The protein operates within nitrogen metabolism; (S)-allantoin degradation; allantoate from (S)-allantoin: step 1/1. Its function is as follows. Catalyzes the conversion of allantoin (5-ureidohydantoin) to allantoic acid by hydrolytic cleavage of the five-member hydantoin ring. The chain is Allantoinase from Escherichia coli O139:H28 (strain E24377A / ETEC).